The primary structure comprises 384 residues: MAKHLFTSESVSEGHPDKIADQISDAVLDAILQQDPKARVACETYVKTGMVLVGGEITTSAWVDIEEITRNTVREIGYVHSDMGFDANSCAVLSAIGKQSPDINQGVDRADPLEQGAGDQGLMFGYATNETDVLMPAPITYAHRLVQRQAEVRKNGTLPWLRPDAKSQVTFQYDDGKIVGIDAVVLSTQHAEDIDQKSLQEAVMEEIIKPILPSEWLNTSTKFFINPTGRFVIGGPMGDCGLTGRKIIVDTYGGMARHGGGAFSGKDPSKVDRSAAYAARYVAKNIVAAGLADRCEIQVSYAIGVAEPTSIMVETFGTEKVSSEQLTLLVREFFDLRPYGLIQMLDLLHPIYKETAAYGHFGRENFPWEKTDKAQLLRDAAGLK.

His-15 contributes to the ATP binding site. Residue Asp-17 participates in Mg(2+) binding. A K(+)-binding site is contributed by Glu-43. L-methionine-binding residues include Glu-56 and Gln-99. A flexible loop region spans residues 99-109 (QSPDINQGVDR). ATP-binding positions include 164 to 166 (DAK), 230 to 231 (RF), Asp-239, 245 to 246 (RK), Ala-262, and Lys-266. Asp-239 is an L-methionine binding site. Residue Lys-270 coordinates L-methionine.

It belongs to the AdoMet synthase family. In terms of assembly, homotetramer; dimer of dimers. Requires Mg(2+) as cofactor. K(+) serves as cofactor.

It is found in the cytoplasm. The enzyme catalyses L-methionine + ATP + H2O = S-adenosyl-L-methionine + phosphate + diphosphate. Its pathway is amino-acid biosynthesis; S-adenosyl-L-methionine biosynthesis; S-adenosyl-L-methionine from L-methionine: step 1/1. Its function is as follows. Catalyzes the formation of S-adenosylmethionine (AdoMet) from methionine and ATP. The overall synthetic reaction is composed of two sequential steps, AdoMet formation and the subsequent tripolyphosphate hydrolysis which occurs prior to release of AdoMet from the enzyme. This chain is S-adenosylmethionine synthase, found in Salmonella arizonae (strain ATCC BAA-731 / CDC346-86 / RSK2980).